A 510-amino-acid polypeptide reads, in one-letter code: Sphingolipid C9-methyltransferase B (510 aa).

N-linked (GlcNAc...) asparagine glycosylation occurs at Asn-55. A run of 2 helical transmembrane segments spans residues 62-82 and 84-104; these read LLGG…GGGA and TFVF…WTYA. N-linked (GlcNAc...) asparagine glycosylation is present at Asn-175. S-adenosyl-L-methionine is bound by residues 227–228, 264–272, 290–295, and 320–321; these read YT, MLDIGCGWG, TIAENQ, and YR. The N-linked (GlcNAc...) asparagine glycan is linked to Asn-294.

This sequence belongs to the CFA/CMAS family.

It localises to the membrane. It catalyses the reaction a (4E,8E)-4-sphinga-4,8-dienine ceramide + S-adenosyl-L-methionine = a 9-methyl-(4E,8E)-sphinga-4,8-dienine ceramide + S-adenosyl-L-homocysteine + H(+). Its pathway is lipid metabolism; sphingolipid metabolism. Catalyzes methylation of the sphingoid base component of glucosylceramides (GluCers) at the C9-position. Sphingolipid C9-methylation requires 4,8-desaturated ceramides as substrates. Glucosylceramides play important roles in growth, differentiation and pathogenicity. The methyl group at the C9-position distinguishes fungal glucosylceramides from those of plants and animals and may thus play a role in host-pathogen interactions enabling the host to recognize the fungal attack and initiate specific defense responses. The protein is Sphingolipid C9-methyltransferase B of Emericella nidulans (strain FGSC A4 / ATCC 38163 / CBS 112.46 / NRRL 194 / M139) (Aspergillus nidulans).